We begin with the raw amino-acid sequence, 178 residues long: Ribosome maturation factor RimM (178 aa).

Residues Ser-103–Leu-177 form the PRC barrel domain.

It belongs to the RimM family. Binds ribosomal protein uS19.

The protein resides in the cytoplasm. Functionally, an accessory protein needed during the final step in the assembly of 30S ribosomal subunit, possibly for assembly of the head region. Essential for efficient processing of 16S rRNA. May be needed both before and after RbfA during the maturation of 16S rRNA. It has affinity for free ribosomal 30S subunits but not for 70S ribosomes. The protein is Ribosome maturation factor RimM of Thermosipho africanus (strain TCF52B).